The following is a 437-amino-acid chain: Vacuolar cation/proton exchanger 2 (437 aa).

The segment at 1–29 is disordered; sequence MMGAEKAEGMEELELEEGGGSPSPSPMTA. Residues 1–65 are Cytoplasmic-facing; sequence MMGAEKAEGM…KWRRALTSVR (65 aa). Residues 66–86 traverse the membrane as a helical segment; the sequence is VVILQAKINVLLPFGPLAVML. Topologically, residues 87 to 88 are extracellular; it reads HY. The chain crosses the membrane as a helical span at residues 89–109; sequence LSANHQGWVFLFSLIGITPLA. Residues 110–126 are Cytoplasmic-facing; it reads ERLGYATEQLALYTGPT. A helical transmembrane segment spans residues 127-147; sequence IGGLLNATFGNATEMIISLYA. The interval 136 to 171 is cation selection; that stretch reads GNATEMIISLYALKNGMIRVVQQSLLGSILSNMLLV. Over 148–161 the chain is Extracellular; the sequence is LKNGMIRVVQQSLL. A helical transmembrane segment spans residues 162–182; sequence GSILSNMLLVLGCAFFAGGLV. Residues 183–194 are Cytoplasmic-facing; it reads HPSRDQVFNKAS. A helical transmembrane segment spans residues 195–215; sequence AVVNSGLLLMAVLGLMFPAVL. Residues 216–228 are Extracellular-facing; sequence HFTHSEVQYGKSE. The chain crosses the membrane as a helical span at residues 229–249; sequence VSLSRFSSCIMLVAYASYLFF. Residues 250-281 lie on the Cytoplasmic side of the membrane; it reads QLKSQRSLYSPIGEQEEEVTEDEEEEKEITQG. Residues 282–302 traverse the membrane as a helical segment; the sequence is EAICWLFVLTIWISILSGYLV. Residues 303-310 lie on the Extracellular side of the membrane; sequence DAIQGASE. The helical transmembrane segment at 311–331 threads the bilayer; it reads SLNMPVAFISVILLPIVGNAA. Residues 328–363 form a cation selection region; it reads GNAAEHASAIMFAMKDKLDITLGVAIGSSTQISMFV. Over 332–352 the chain is Cytoplasmic; the sequence is EHASAIMFAMKDKLDITLGVA. A helical transmembrane segment spans residues 353–373; sequence IGSSTQISMFVIPFCVVIGWI. The Extracellular segment spans residues 374-379; that stretch reads MGQQMD. The helical transmembrane segment at 380 to 400 threads the bilayer; that stretch reads LNFQLFETATLFITVLVVAFM. The Cytoplasmic segment spans residues 401 to 408; the sequence is LQEGTSNY. The helical transmembrane segment at 409–429 threads the bilayer; sequence FKGLMLILCYLIVAASFFVHV. The Extracellular segment spans residues 430 to 437; the sequence is DPDSSNNK.

This sequence belongs to the Ca(2+):cation antiporter (CaCA) (TC 2.A.19) family. Cation/proton exchanger (CAX) subfamily. As to expression, expressed in roots and shoots.

Its subcellular location is the vacuole membrane. Its function is as follows. Vacuolar cation/proton exchanger (CAX). Translocates Ca(2+) and other metal ions into vacuoles using the proton gradient formed by H(+)-ATPase and H(+)-pyrophosphatase. In Oryza sativa subsp. japonica (Rice), this protein is Vacuolar cation/proton exchanger 2 (CAX2).